The following is a 101-amino-acid chain: Small ribosomal subunit protein uS14 (101 aa).

This sequence belongs to the universal ribosomal protein uS14 family. In terms of assembly, part of the 30S ribosomal subunit. Contacts proteins S3 and S10.

Its function is as follows. Binds 16S rRNA, required for the assembly of 30S particles and may also be responsible for determining the conformation of the 16S rRNA at the A site. This Salmonella paratyphi A (strain ATCC 9150 / SARB42) protein is Small ribosomal subunit protein uS14.